A 627-amino-acid chain; its full sequence is Membrane protein insertase YidC (627 aa).

6 helical membrane-spanning segments follow: residues 3–23, 376–396, 450–470, 502–522, 534–554, and 558–578; these read KNTVIGLVLIGLVIFGFSWLN, WGLIILLLTLGIKLLISPLAY, LPMLLQFPFLIAMYMYFPTTI, FYGNHVSLFCLLMSISNILYI, EGMAMLKWMPYITTVMFLFFF, and ASGLCYYYFLSSIITVIQYMS.

The protein belongs to the OXA1/ALB3/YidC family. Type 1 subfamily. In terms of assembly, interacts with the Sec translocase complex via SecD. Specifically interacts with transmembrane segments of nascent integral membrane proteins during membrane integration.

The protein localises to the cell inner membrane. In terms of biological role, required for the insertion and/or proper folding and/or complex formation of integral membrane proteins into the membrane. Involved in integration of membrane proteins that insert both dependently and independently of the Sec translocase complex, as well as at least some lipoproteins. Aids folding of multispanning membrane proteins. This Porphyromonas gingivalis (strain ATCC 33277 / DSM 20709 / CIP 103683 / JCM 12257 / NCTC 11834 / 2561) protein is Membrane protein insertase YidC.